A 781-amino-acid polypeptide reads, in one-letter code: MAEAVLENVNVPAVVSKDECIYCFESPYNEPLALNASPKHSLNICLNCFQATCNRHVPLHIRVTEYACDTIHSNYLTIAKVEKPKQENVEENNNNKKIKLQVIETSEDDTHNTIWSLQRFNGENVPRTVLSKSTDSDISSTALEKIEKILKAKSQDFEDKKNSWVLEISTCPHTENFQIPSKPENTVNLNQCSSCDLTQNLWLCLHCGNIGCGREQIGIDGHSHALDHYRSNNNHPLAIKLGSLSSSTYDLYCYACDDETRFPDNVNLGSALQIYGINIQEKIADEKTLVQLQVEQNENWQFRMVDSSGKEFEKLSASKNYGCGLINLGNSCYLNSVIQSLVNGGVPNWSLDFLGSKFPLDVVYPDNNLKCQWIKLLNAMKCEPELYPNGIKPTTFKKCIGQNHQEFSSNRQQDAMEFLTFLLDLLDKKFFSSSSSGIPNPNDLVRFMMEDRLQCNICGKVKYSYEPTEAIQIPLEENDEPQDMLERIKAYFEGQTIEFKCANCKEKVTANKKPGFKSLPQTLILNPIRIRLQNWIPVKTSNELSLPGLIDRDDMLDVSSYLSQGFDPQTENLLPDEDENRSSFTPNQCSISQLIEMGFTQNASVRALFNTGNQDAESAMNWLFQHMDDPDLNDPFVPPPNVPKKDKREVDEVSLTSMLSMGLNPNLCRKALILNNGDVNRSVEWVFNNMDDDGTFPEPEVPNEEQQQKKDLGYSTAKPYALTAVICHKGNSVHSGHYVVFIRKLVADKWKWVLYNDEKLVAADSIEDMKKNGYIYFYTRC.

The UBP-type zinc-finger motif lies at 169–279 (STCPHTENFQ…SALQIYGINI (111 aa)). Zn(2+)-binding residues include Cys171, His173, Cys192, Cys195, Cys204, Cys207, Cys212, His224, His228, His235, Cys253, and Cys256. A USP domain is found at 323–781 (CGLINLGNSC…NGYIYFYTRC (459 aa)). The Nucleophile role is filled by Cys332. UBA domains follow at residues 576–626 (DEDE…LFQH) and 649–689 (EVDE…VFNN). Catalysis depends on His737, which acts as the Proton acceptor.

The protein belongs to the peptidase C19 family.

The protein resides in the cytoplasm. Its subcellular location is the nucleus. The enzyme catalyses Thiol-dependent hydrolysis of ester, thioester, amide, peptide and isopeptide bonds formed by the C-terminal Gly of ubiquitin (a 76-residue protein attached to proteins as an intracellular targeting signal).. Required for the adaptation to the presence of glucose in the growth medium; mediates the degradation of enzymes involved in gluconeogenesis when cells are shifted to glucose-containing medium. Required for proteasome-dependent catabolite degradation of fructose-1,6-bisphosphatase (FBP1). Accelerates proteasomal breakdown of ubiquitinated proteins as it disassembles free ubiquitin chains that would compete with ubiquitinated proteins to bind to the proteasome. This chain is Ubiquitin carboxyl-terminal hydrolase 14 (UBP14), found in Saccharomyces cerevisiae (strain ATCC 204508 / S288c) (Baker's yeast).